A 37-amino-acid chain; its full sequence is Large ribosomal subunit protein bL36c (37 aa).

In terms of assembly, component of the chloroplast large ribosomal subunit (LSU). Mature 70S chloroplast ribosomes of higher plants consist of a small (30S) and a large (50S) subunit. The 30S small subunit contains 1 molecule of ribosomal RNA (16S rRNA) and 24 different proteins. The 50S large subunit contains 3 rRNA molecules (23S, 5S and 4.5S rRNA) and 33 different proteins.

The protein localises to the plastid. It is found in the chloroplast. Its function is as follows. Component of the chloroplast ribosome (chloro-ribosome), a dedicated translation machinery responsible for the synthesis of chloroplast genome-encoded proteins, including proteins of the transcription and translation machinery and components of the photosynthetic apparatus. This is Large ribosomal subunit protein bL36c (rpl36) from Spinacia oleracea (Spinach).